A 369-amino-acid polypeptide reads, in one-letter code: Cytoplasmic tRNA 2-thiolation protein 1 (369 aa).

This sequence belongs to the TtcA family. CTU1/NCS6/ATPBD3 subfamily.

The protein resides in the cytoplasm. It participates in tRNA modification; 5-methoxycarbonylmethyl-2-thiouridine-tRNA biosynthesis. Its function is as follows. Plays a central role in 2-thiolation of mcm(5)S(2)U at tRNA wobble positions of tRNA(Lys), tRNA(Glu) and tRNA(Gln). Directly binds tRNAs and probably acts by catalyzing adenylation of tRNAs, an intermediate required for 2-thiolation. It is unclear whether it acts as a sulfurtransferase that transfers sulfur from thiocarboxylated URM1 onto the uridine of tRNAs at wobble position. Prior mcm(5) tRNA modification by the elongator complex is required for 2-thiolation. May also be involved in protein urmylation. The chain is Cytoplasmic tRNA 2-thiolation protein 1 from Cryptococcus neoformans var. neoformans serotype D (strain JEC21 / ATCC MYA-565) (Filobasidiella neoformans).